We begin with the raw amino-acid sequence, 425 residues long: Gamma-glutamyl phosphate reductase (425 aa).

This sequence belongs to the gamma-glutamyl phosphate reductase family.

Its subcellular location is the cytoplasm. The enzyme catalyses L-glutamate 5-semialdehyde + phosphate + NADP(+) = L-glutamyl 5-phosphate + NADPH + H(+). It functions in the pathway amino-acid biosynthesis; L-proline biosynthesis; L-glutamate 5-semialdehyde from L-glutamate: step 2/2. Catalyzes the NADPH-dependent reduction of L-glutamate 5-phosphate into L-glutamate 5-semialdehyde and phosphate. The product spontaneously undergoes cyclization to form 1-pyrroline-5-carboxylate. This Symbiobacterium thermophilum (strain DSM 24528 / JCM 14929 / IAM 14863 / T) protein is Gamma-glutamyl phosphate reductase.